The following is a 389-amino-acid chain: Phosphoglycerate kinase (389 aa).

Substrate contacts are provided by residues 21-23 (DLN), arginine 36, 59-62 (HLGR), arginine 112, and arginine 145. Residues lysine 196, glutamate 313, and 342–345 (GGDT) contribute to the ATP site.

Belongs to the phosphoglycerate kinase family. Monomer.

It is found in the cytoplasm. It carries out the reaction (2R)-3-phosphoglycerate + ATP = (2R)-3-phospho-glyceroyl phosphate + ADP. Its pathway is carbohydrate degradation; glycolysis; pyruvate from D-glyceraldehyde 3-phosphate: step 2/5. The sequence is that of Phosphoglycerate kinase from Histophilus somni (strain 2336) (Haemophilus somnus).